The chain runs to 869 residues: Serendipity locus protein H-1 (869 aa).

Positions 1 to 17 (MEGGKGEGKRMKEEAPS) are enriched in basic and acidic residues. Disordered stretches follow at residues 1–32 (MEGG…AGTP) and 134–165 (FSVT…TPVK). A compositionally biased stretch (polar residues) spans 146 to 164 (AFTNSPFKKTSSSGTSTPV). 8 consecutive C2H2-type zinc fingers follow at residues 269–293 (HKCL…AAAH), 299–321 (YRCS…LKTH), 331–352 (KKCP…RKIH), 358–380 (YQCD…ARIH), 386–408 (YECP…QKYH), 414–436 (YRCE…NLVH), 442–464 (FACT…SNIH), and 470–493 (FKCN…RRRH). Disordered regions lie at residues 554–573 (TSTA…QPQQ) and 617–652 (PKQT…SSLE). Over residues 630–648 (APKQLQQKPQLLQQGQPQQ) the composition is skewed to low complexity.

In terms of tissue distribution, distribution varies between nurse cells and the oocyte during oogenesis. Weakly expressed in follicle and border cells.

The protein resides in the nucleus. May belong to a complex set of multifingered proteins which play an important role in gene activation or regulation at early embryonic stages through a maximal accumulation of their transcripts (or protein product) in the mature oocyte. This is Serendipity locus protein H-1 (wdn) from Drosophila melanogaster (Fruit fly).